The sequence spans 636 residues: Transcriptional repressor CTCFL (636 aa).

3 disordered regions span residues 17–38 (KEQK…VQRV), 160–195 (ENPE…DKRE), and 222–257 (LEEQ…PQSF). The span at 160–170 (ENPELTPDLDE) shows a compositional bias: acidic residues. The segment covering 242–251 (AKPKRRRQTK) has biased composition (basic residues). C2H2-type zinc fingers lie at residues 257–279 (FQCD…IKIH), 285–307 (HLCH…VNTH), 313–336 (HKCR…RYKH), 342–364 (FKCS…IRSH), 370–392 (FQCC…MRTH), 398–421 (YECP…AQKH), 428–451 (YECP…RNLH), 458–480 (MKCR…QRTH), 486–508 (FKCK…MRMH), 514–537 (FSCL…RKYH), and 546–572 (HLCL…DPEH). Residues 562-624 (QRHRKKCDPE…AAGSQSPDHG (63 aa)) are disordered. The span at 568-583 (CDPEHETLAPNKDRRP) shows a compositional bias: basic and acidic residues.

It belongs to the CTCF zinc-finger protein family. Interacts with histones, PRMT7 and SETD1A. Interacts (via N-terminus) with BAG6/BAT3. In terms of tissue distribution, testis-specific.

The protein localises to the cytoplasm. The protein resides in the nucleus. Its function is as follows. Testis-specific DNA binding protein responsible for insulator function, nuclear architecture and transcriptional control, which probably acts by recruiting epigenetic chromatin modifiers. Plays a key role in gene imprinting in male germline, by participating in the establishment of differential methylation at the IGF2/H19 imprinted control region (ICR). Directly binds the unmethylated H19 ICR and recruits the PRMT7 methyltransferase, leading to methylate histone H4 'Arg-3' to form H4R3sme2. This probably leads to recruit de novo DNA methyltransferases at these sites. Seems to act as tumor suppressor. In association with DNMT1 and DNMT3B, involved in activation of BAG1 gene expression by binding to its promoter. Required for dimethylation of H3 lysine 4 (H3K4me2) of MYC and BRCA1 promoters. The sequence is that of Transcriptional repressor CTCFL (Ctcfl) from Mus musculus (Mouse).